Consider the following 245-residue polypeptide: 2,3-bisphosphoglycerate-dependent phosphoglycerate mutase (245 aa).

Substrate is bound by residues 8–15, 21–22, R60, 87–90, K98, 114–115, and 183–184; these read RHGQSLWN, TG, ERHY, RR, and GN. The Tele-phosphohistidine intermediate role is filled by H9. E87 functions as the Proton donor/acceptor in the catalytic mechanism.

Belongs to the phosphoglycerate mutase family. BPG-dependent PGAM subfamily.

It carries out the reaction (2R)-2-phosphoglycerate = (2R)-3-phosphoglycerate. The protein operates within carbohydrate degradation; glycolysis; pyruvate from D-glyceraldehyde 3-phosphate: step 3/5. Functionally, catalyzes the interconversion of 2-phosphoglycerate and 3-phosphoglycerate. The chain is 2,3-bisphosphoglycerate-dependent phosphoglycerate mutase from Bacillus cereus (strain B4264).